Consider the following 372-residue polypeptide: NAD(P)H-quinone oxidoreductase subunit 1 (372 aa).

The next 8 membrane-spanning stretches (helical) occupy residues I28–V48, W97–V117, V130–G150, L176–V196, I204–L224, L265–P285, S308–L328, and V351–G371.

The protein belongs to the complex I subunit 1 family. In terms of assembly, NDH-1 is composed of at least 11 different subunits.

It localises to the cellular thylakoid membrane. It carries out the reaction a plastoquinone + NADH + (n+1) H(+)(in) = a plastoquinol + NAD(+) + n H(+)(out). The catalysed reaction is a plastoquinone + NADPH + (n+1) H(+)(in) = a plastoquinol + NADP(+) + n H(+)(out). NDH-1 shuttles electrons from an unknown electron donor, via FMN and iron-sulfur (Fe-S) centers, to quinones in the respiratory and/or the photosynthetic chain. The immediate electron acceptor for the enzyme in this species is believed to be plastoquinone. Couples the redox reaction to proton translocation, and thus conserves the redox energy in a proton gradient. This is NAD(P)H-quinone oxidoreductase subunit 1 from Picosynechococcus sp. (strain ATCC 27264 / PCC 7002 / PR-6) (Agmenellum quadruplicatum).